The chain runs to 463 residues: uncharacterized protein (463 aa).

In terms of domain architecture, TRAM spans 9–67 (VLKKGQRFPLTIKRLGINGEGVGYFKRHVVFVPGALPGEEVVVEVTDVKPRFAEASIRK). Positions 80, 86, 89, and 169 each coordinate [4Fe-4S] cluster. Gln293, Tyr322, Asp343, and Asp391 together coordinate S-adenosyl-L-methionine. The active-site Nucleophile is the Cys418.

It belongs to the class I-like SAM-binding methyltransferase superfamily. RNA M5U methyltransferase family.

This is an uncharacterized protein from Halalkalibacterium halodurans (strain ATCC BAA-125 / DSM 18197 / FERM 7344 / JCM 9153 / C-125) (Bacillus halodurans).